The chain runs to 100 residues: Urease subunit gamma (100 aa).

The protein belongs to the urease gamma subunit family. In terms of assembly, heterotrimer of UreA (gamma), UreB (beta) and UreC (alpha) subunits. Three heterotrimers associate to form the active enzyme.

Its subcellular location is the cytoplasm. It catalyses the reaction urea + 2 H2O + H(+) = hydrogencarbonate + 2 NH4(+). It functions in the pathway nitrogen metabolism; urea degradation; CO(2) and NH(3) from urea (urease route): step 1/1. This chain is Urease subunit gamma, found in Edwardsiella ictaluri (strain 93-146).